The following is a 211-amino-acid chain: Methylthioribulose-1-phosphate dehydratase (211 aa).

Positions 101 and 103 each coordinate Zn(2+).

Belongs to the aldolase class II family. MtnB subfamily. Zn(2+) is required as a cofactor.

The catalysed reaction is 5-(methylsulfanyl)-D-ribulose 1-phosphate = 5-methylsulfanyl-2,3-dioxopentyl phosphate + H2O. It participates in amino-acid biosynthesis; L-methionine biosynthesis via salvage pathway; L-methionine from S-methyl-5-thio-alpha-D-ribose 1-phosphate: step 2/6. Its function is as follows. Catalyzes the dehydration of methylthioribulose-1-phosphate (MTRu-1-P) into 2,3-diketo-5-methylthiopentyl-1-phosphate (DK-MTP-1-P). This Alcanivorax borkumensis (strain ATCC 700651 / DSM 11573 / NCIMB 13689 / SK2) protein is Methylthioribulose-1-phosphate dehydratase.